Here is a 349-residue protein sequence, read N- to C-terminus: Twinfilin-2 (349 aa).

Ala-2 is modified (N-acetylalanine). 2 consecutive ADF-H domains span residues 4–139 (QTGI…KHLS) and 177–313 (GLAF…DEVH). Lys-14 is subject to N6-acetyllysine. Tyr-309 is subject to Phosphotyrosine. The interval 322–349 (AFAKPKGPGGKRGHKRLIRGPGENGDDS) is disordered. Positions 330–339 (GGKRGHKRLI) are enriched in basic residues. The residue at position 349 (Ser-349) is a Phosphoserine.

Belongs to the actin-binding proteins ADF family. Twinfilin subfamily. Interacts with G-actin; ADP-actin form and capping protein (CP). May also be able to interact with TWF1 and phosphoinositides, PI(4,5)P2. When bound to PI(4,5)P2, it is down-regulated. Interacts with MYO7A. Post-translationally, in vitro, phosphorylated by PRKCZ, CK2 and SRC. As to expression, ubiquitously expressed (at protein level).

It is found in the cytoplasm. The protein resides in the cytoskeleton. Its subcellular location is the perinuclear region. The protein localises to the cell projection. It localises to the stereocilium. In terms of biological role, actin-binding protein involved in motile and morphological processes. Inhibits actin polymerization, likely by sequestering G-actin. By capping the barbed ends of filaments, it also regulates motility. Seems to play an important role in clathrin-mediated endocytosis and distribution of endocytic organelles. May play a role in regulating the mature length of the middle and short rows of stereocilia. This Homo sapiens (Human) protein is Twinfilin-2 (TWF2).